The primary structure comprises 410 residues: Arginine biosynthesis bifunctional protein ArgJ (410 aa).

The substrate site is built by T158, K184, T195, E282, N405, and S410. T195 serves as the catalytic Nucleophile.

Belongs to the ArgJ family. As to quaternary structure, heterotetramer of two alpha and two beta chains.

Its subcellular location is the cytoplasm. The enzyme catalyses N(2)-acetyl-L-ornithine + L-glutamate = N-acetyl-L-glutamate + L-ornithine. It catalyses the reaction L-glutamate + acetyl-CoA = N-acetyl-L-glutamate + CoA + H(+). It functions in the pathway amino-acid biosynthesis; L-arginine biosynthesis; L-ornithine and N-acetyl-L-glutamate from L-glutamate and N(2)-acetyl-L-ornithine (cyclic): step 1/1. The protein operates within amino-acid biosynthesis; L-arginine biosynthesis; N(2)-acetyl-L-ornithine from L-glutamate: step 1/4. In terms of biological role, catalyzes two activities which are involved in the cyclic version of arginine biosynthesis: the synthesis of N-acetylglutamate from glutamate and acetyl-CoA as the acetyl donor, and of ornithine by transacetylation between N(2)-acetylornithine and glutamate. This is Arginine biosynthesis bifunctional protein ArgJ from Bartonella henselae (strain ATCC 49882 / DSM 28221 / CCUG 30454 / Houston 1) (Rochalimaea henselae).